The sequence spans 688 residues: Glycine--tRNA ligase beta subunit (688 aa).

The protein belongs to the class-II aminoacyl-tRNA synthetase family. Tetramer of two alpha and two beta subunits.

It localises to the cytoplasm. The catalysed reaction is tRNA(Gly) + glycine + ATP = glycyl-tRNA(Gly) + AMP + diphosphate. The chain is Glycine--tRNA ligase beta subunit from Listeria monocytogenes serotype 4a (strain HCC23).